Reading from the N-terminus, the 220-residue chain is ATP-dependent Clp protease proteolytic subunit 1 (220 aa).

Ser-118 functions as the Nucleophile in the catalytic mechanism. The active site involves His-143.

The protein belongs to the peptidase S14 family. As to quaternary structure, fourteen ClpP subunits assemble into 2 heptameric rings which stack back to back to give a disk-like structure with a central cavity, resembling the structure of eukaryotic proteasomes.

The protein resides in the cytoplasm. The enzyme catalyses Hydrolysis of proteins to small peptides in the presence of ATP and magnesium. alpha-casein is the usual test substrate. In the absence of ATP, only oligopeptides shorter than five residues are hydrolyzed (such as succinyl-Leu-Tyr-|-NHMec, and Leu-Tyr-Leu-|-Tyr-Trp, in which cleavage of the -Tyr-|-Leu- and -Tyr-|-Trp bonds also occurs).. Its function is as follows. Cleaves peptides in various proteins in a process that requires ATP hydrolysis. Has a chymotrypsin-like activity. Plays a major role in the degradation of misfolded proteins. The polypeptide is ATP-dependent Clp protease proteolytic subunit 1 (Rhodococcus jostii (strain RHA1)).